Here is a 3092-residue protein sequence, read N- to C-terminus: Probable polyketide synthase 45 (3092 aa).

The region spanning 10 to 430 (DNDVAIIGIG…GSNVCLILTE (421 aa)) is the Ketosynthase family 3 (KS3) domain. Residues C170, H315, and H353 each act as for beta-ketoacyl synthase activity in the active site. An acyl/malonyl transferase region spans residues 640 to 673 (GILASISIGHSLGEVSSAVCSGMIDLETGCFIIY). The active-site For acyl/malonyl transferase activity is S650. Positions 967 to 1087 (INQLGNRNER…GKFSITKHND (121 aa)) are N-terminal hotdog fold. Residues 967 to 1254 (INQLGNRNER…YTQLTPYKNQ (288 aa)) form the PKS/mFAS DH domain. The active-site Proton acceptor; for dehydratase activity is H999. The segment at 1103–1254 (NFVTIQKKEL…YTQLTPYKNQ (152 aa)) is C-terminal hotdog fold. The active-site Proton donor; for dehydratase activity is D1165. Positions 2566–2644 (SDDLSIREEI…QLIQSVTDAM (79 aa)) constitute a Carrier domain. Position 2604 is an O-(pantetheine 4'-phosphoryl)serine (S2604). Residues 2705–2725 (NTVFLTGSSGFIGIYILFYLI) traverse the membrane as a helical segment.

It depends on pantetheine 4'-phosphate as a cofactor.

The protein resides in the membrane. Probable polyketide synthase. This chain is Probable polyketide synthase 45 (pks45), found in Dictyostelium discoideum (Social amoeba).